The sequence spans 366 residues: Protein disulfide isomerase-like 2-1 (366 aa).

The signal sequence occupies residues 1-29 (MATPQISRKALASLLLLVAAAAAVSTASA). 2 consecutive Thioredoxin domains span residues 30-138 (DDVL…SEAA) and 139-257 (TNVK…EKCG). Residues cysteine 59, cysteine 62, cysteine 178, and cysteine 181 each act as nucleophile in the active site. 2 disulfides stabilise this stretch: cysteine 59–cysteine 62 and cysteine 178–cysteine 181.

This sequence belongs to the protein disulfide isomerase family.

The protein resides in the secreted. The catalysed reaction is Catalyzes the rearrangement of -S-S- bonds in proteins.. In terms of biological role, acts as a protein-folding catalyst that interacts with nascent polypeptides to catalyze the formation, isomerization, and reduction or oxidation of disulfide bonds. May play a role in storage protein biogenesis. This Oryza sativa subsp. japonica (Rice) protein is Protein disulfide isomerase-like 2-1 (PDIL2-1).